We begin with the raw amino-acid sequence, 266 residues long: Serine/arginine-rich splicing factor 12 (266 aa).

Residues 42-266 (ARPRRPRAPR…SRSYHHKNSW (225 aa)) are disordered. A compositionally biased stretch (basic residues) spans 43-62 (RPRRPRAPRPRLRLRGRPGR). Basic and acidic residues predominate over residues 102 to 114 (KSKERHLCSPSDH). Over residues 115 to 127 (RRSRSPSQRRSRS) the composition is skewed to basic residues. Basic and acidic residues predominate over residues 133–144 (GRDRRHSDSLKE). A compositionally biased stretch (low complexity) spans 151–166 (SYSQSKSRSKSLPRQS). The span at 183–194 (GRSRSKSLPKRS) shows a compositional bias: basic residues. Polar residues-rich tracts occupy residues 202-212 (SRSPQKQTGSG) and 235-244 (AYTSSGSKTQ). The segment covering 245 to 266 (TTKHSHLRSHSRSRSYHHKNSW) has biased composition (basic residues).

It belongs to the splicing factor SR family.

It localises to the nucleus. Functionally, splicing factor that seems to antagonize SR proteins in pre-mRNA splicing regulation. The polypeptide is Serine/arginine-rich splicing factor 12 (Srsf12) (Mus musculus (Mouse)).